The chain runs to 391 residues: Formate-dependent phosphoribosylglycinamide formyltransferase (391 aa).

N(1)-(5-phospho-beta-D-ribosyl)glycinamide-binding positions include 20–21 and E80; that span reads EL. ATP-binding positions include R112, K153, 158–163, 193–196, and E201; these read SSGKGQ and EGFI. The ATP-grasp domain maps to 117–306; the sequence is RLAAETLGLP…EFALHVRAIQ (190 aa). Positions 265 and 277 each coordinate Mg(2+). N(1)-(5-phospho-beta-D-ribosyl)glycinamide is bound by residues D284, K354, and 361 to 362; that span reads RR.

Belongs to the PurK/PurT family. As to quaternary structure, homodimer.

It catalyses the reaction N(1)-(5-phospho-beta-D-ribosyl)glycinamide + formate + ATP = N(2)-formyl-N(1)-(5-phospho-beta-D-ribosyl)glycinamide + ADP + phosphate + H(+). The protein operates within purine metabolism; IMP biosynthesis via de novo pathway; N(2)-formyl-N(1)-(5-phospho-D-ribosyl)glycinamide from N(1)-(5-phospho-D-ribosyl)glycinamide (formate route): step 1/1. Its function is as follows. Involved in the de novo purine biosynthesis. Catalyzes the transfer of formate to 5-phospho-ribosyl-glycinamide (GAR), producing 5-phospho-ribosyl-N-formylglycinamide (FGAR). Formate is provided by PurU via hydrolysis of 10-formyl-tetrahydrofolate. In Shewanella baltica (strain OS185), this protein is Formate-dependent phosphoribosylglycinamide formyltransferase.